Reading from the N-terminus, the 361-residue chain is Inactive 2'-5'-oligoadenylate synthase 1D (361 aa).

Belongs to the 2-5A synthase family. In terms of assembly, interacts with OAS1A, the interaction inhibits OAS1A catalytic activity. As to expression, expressed specifically in oocytes (at protein level). Expressed at highest level in ovary with lesser amounts in intestine, brain, thymus lung, kidney, liver and uterus.

It localises to the cytoplasm. Functionally, does not have 2'-5'-oligoadenylate synthetase activity, but can bind double-stranded RNA. May play a role in the control of female fertility, possibly by binding to and inhibiting OAS1A. The polypeptide is Inactive 2'-5'-oligoadenylate synthase 1D (Mus musculus (Mouse)).